Reading from the N-terminus, the 80-residue chain is UPF0512 protein Q (80 aa).

This sequence belongs to the UPF0512 family.

The chain is UPF0512 protein Q from Dictyostelium discoideum (Social amoeba).